The following is a 460-amino-acid chain: Cysteine--tRNA ligase (460 aa).

Cys28 lines the Zn(2+) pocket. The 'HIGH' region signature appears at 30 to 40 (MTVYDYCHLGH). Zn(2+) is bound by residues Cys209, His234, and Glu238. Positions 266 to 270 (KMSKS) match the 'KMSKS' region motif. ATP is bound at residue Lys269.

It belongs to the class-I aminoacyl-tRNA synthetase family. As to quaternary structure, monomer. Requires Zn(2+) as cofactor.

The protein resides in the cytoplasm. The enzyme catalyses tRNA(Cys) + L-cysteine + ATP = L-cysteinyl-tRNA(Cys) + AMP + diphosphate. This chain is Cysteine--tRNA ligase, found in Pseudomonas syringae pv. syringae (strain B728a).